The primary structure comprises 299 residues: Protoheme IX farnesyltransferase 1 (299 aa).

Helical transmembrane passes span 24–44, 46–66, 97–117, 118–138, 146–166, 170–190, 217–237, 239–259, and 278–298; these read VVAL…PGVP, AAVV…AAMV, LLVA…CCNA, LTAW…TLLL, IVIG…AVNG, AFAL…FWAL, LSIV…VALG, AGAI…FLAV, and IWYL…LIPL.

It belongs to the UbiA prenyltransferase family. Protoheme IX farnesyltransferase subfamily.

It localises to the cell inner membrane. The enzyme catalyses heme b + (2E,6E)-farnesyl diphosphate + H2O = Fe(II)-heme o + diphosphate. The protein operates within porphyrin-containing compound metabolism; heme O biosynthesis; heme O from protoheme: step 1/1. In terms of biological role, converts heme B (protoheme IX) to heme O by substitution of the vinyl group on carbon 2 of heme B porphyrin ring with a hydroxyethyl farnesyl side group. This Chromobacterium violaceum (strain ATCC 12472 / DSM 30191 / JCM 1249 / CCUG 213 / NBRC 12614 / NCIMB 9131 / NCTC 9757 / MK) protein is Protoheme IX farnesyltransferase 1.